A 188-amino-acid polypeptide reads, in one-letter code: Ribosome-recycling factor (188 aa).

The protein belongs to the RRF family.

The protein localises to the cytoplasm. Its function is as follows. Responsible for the release of ribosomes from messenger RNA at the termination of protein biosynthesis. May increase the efficiency of translation by recycling ribosomes from one round of translation to another. This chain is Ribosome-recycling factor, found in Anaeromyxobacter dehalogenans (strain 2CP-C).